Reading from the N-terminus, the 612-residue chain is Cryptochrome-2 (612 aa).

The interval 1 to 485 (MKMDKKTIVW…TARELLAKAI (485 aa)) is CNT2, binds chromophores to sense blue light and mediate CRY dimerization. The Photolyase/cryptochrome alpha/beta domain occupies 5–134 (KKTIVWFRRD…SVQSYNGDLL (130 aa)). Position 232 (Y232) interacts with FAD. N235 and S243 together coordinate Mg(2+). 244–248 (TSLLS) lines the FAD pocket. H355 contributes to the Mg(2+) binding site. Residues N356 and 387–389 (DAD) contribute to the FAD site. 356–357 (NR) lines the ATP pocket. Residue D406 participates in ATP binding. Residues 486–612 (SRTREAQIMI…TTSLGKNGCK (127 aa)) form a CCT2/CCE2, mediates blue light signaling region. The tract at residues 539 to 576 (GSKRVKPEEEEERDMKKSRGFDERELFSTAESSSSSSV) is disordered. The short motif at 541 to 555 (KRVKPEEEEERDMKK) is the Nuclear localization signal element. The segment covering 551–564 (RDMKKSRGFDEREL) has biased composition (basic and acidic residues). S587 is modified (phosphoserine; by CK1). Residues 590–612 (KNLEGIQDSSDQITTSLGKNGCK) are disordered. Residues 596 to 612 (QDSSDQITTSLGKNGCK) show a composition bias toward polar residues. Residues S598 and S599 each carry the phosphoserine modification. T603 is subject to Phosphothreonine; by CK1. Position 605 is a phosphoserine (S605).

It belongs to the DNA photolyase class-1 family. Homodimer. Blue-light dependent dimerization. Interacts with COP1 and PHYB in the nucleus. Binds reversibly to CIBs proteins such as BHLH63/CIB1, BHLH78/CIB2, BHLH74/CIB4 and BHLH76/CIB5 after blue light illumination to stimulate their transcription factor activities. Interacts with PIF4 and PIF5 in the nucleus in response to low blue light (LBL). Binds to SPA1 in response to blue light, this interaction prevents SPA1/COP1 complex formation but stimulates interaction with COP1, and thus avoid COP1-dependent degradation of the transcription factors CO and HY5 by the proteasome and promotes hypocotyl elongation and floral initiation. Binding to ATP mediates conformational changes which facilitate flavin binding. Interacts with BIC1 in both darkness and light. Interacts with NRP. The cofactor is FAD. (6R)-5,10-methylene-5,6,7,8-tetrahydrofolate is required as a cofactor. Phosphorylated by CK1.3 and CK1.4; in response to blue light. Required for degradation. Adopts an open conformation when phosphorylated upon photoexcitation and thus interacts with signaling partner proteins. Not autophosphorylated, even in complex with FAD cofactor. In terms of processing, ubiquitinated; in response to blue light. As to expression, mostly expressed in the shoot meristems and root tips, and, to a lower extent, in the cotyledons, hypocotyls, and roots.

Its subcellular location is the nucleus. The protein localises to the PML body. It is found in the cytoplasm. Its function is as follows. Photoreceptor that mediates primarily blue light inhibition of hypocotyl elongation and photoperiodic control of floral initiation, and regulates other light responses, including circadian rhythms, tropic growth, stomata opening, guard cell development, root development, bacterial and viral pathogen responses, abiotic stress responses, cell cycles, programmed cell death, apical dominance, fruit and ovule development, seed dormancy, and magnetoreception. Photoexcited cryptochromes interact with signaling partner proteins to alter gene expression at both transcriptional and post-translational levels and, consequently, regulate the corresponding metabolic and developmental programs. Blue-light absorbing flavoprotein that activates reversible flavin photoreduction via an electron transport chain comprising a tryptophan triad (W-321, W-374 and W-397), or via an alternative electron transport that involves small metabolites, including NADPH, NADH, and ATP. The half-life of the activated signaling state is about 16 minutes. Perceives low blue light (LBL) and responds by directly contacting two bHLH transcription factors, PIF4 and PIF5, at chromatin on E-box variant 5'-CA[CT]GTG-3' to promote their activity and stimulate specific gene expression to adapt global physiology (e.g. hypocotyl elongation and hyponastic growth in low blue light). In response to blue light, binds to CIB proteins (e.g. BHLH63/CIB1 and BHLH76/CIB5) to activate transcription and floral initiation. Mediates blue light-induced gene expression, floral initiation and hypocotyl elongation through the interaction with SPA1 that prevents formation of SPA1/COP1 complex but stimulates COP1 binding, and thus inhibits COP1-mediated degradation of transcription factors (e.g. CO and HY5). Promotes flowering time in continuous light (LL). Involved in shortening the circadian clock period, especially at 27 degrees Celsius, in blue light (BL). Required to maintain clock genes expression rhythm. Triggers nuclear accumulation of ROS in response to blue light illumination. Involved in blue light-dependent stomatal opening, transpiration and inhibition of stem and root growth, probably by regulating abscisic acid (ABA). Regulates the timing of flowering by promoting the expression of 'FLOWERING LOCUS T' (FT) in vascular bundles. Negatively regulated by 'FLOWERING LOCUS C' (FLC). General positive regulator of reversible low light-induced chromatin decompaction. Involved in triggering chromatin decondensation during floral transition. Together with phototropins, involved in phototropism regulation by various blue light fluence; blue light attenuates phototropism in high fluence rates (100 umol.m-2.s-1) but enhances phototropism in low fluence rates (&lt;1.0 umol.m-2.s-1). The effect of near-null magnetic field on flowering is altered by changes of blue light cycle and intensity in a CRY1/CRY2-dependent manner. Involved in the strigolactone signaling that regulates hypocotyl growth in response to blue light. Functionally, confers resistance to turnip crinkle virus (TCV) by preventing COP1-mediated proteasome-mediated degradation of RPP8/HRT, thus promoting its stability in light. Exposure to darkness or blue-light induces degradation of CRY2, and in turn of RPP8/HRT, resulting in susceptibility to TCV. The sequence is that of Cryptochrome-2 from Arabidopsis thaliana (Mouse-ear cress).